Here is a 375-residue protein sequence, read N- to C-terminus: G-protein coupled estrogen receptor 1 (375 aa).

Methionine 1 bears the N-acetylmethionine mark. Residues 1-62 (MDATTPAQTV…QQYVIALFLS (62 aa)) are Extracellular-facing. 2 N-linked (GlcNAc...) asparagine glycosylation sites follow: asparagine 32 and asparagine 44. Residues 63–84 (CLYTIFLFPIGFVGNILILVVN) traverse the membrane as a helical segment. Residues 85–96 (ISFREKMTIPDL) are Cytoplasmic-facing. Residues 97 to 120 (YFINLAAADLILVADSLIEVFNLD) traverse the membrane as a helical segment. The Extracellular segment spans residues 121–132 (EQYYDIAVLCTF). A disulfide bridge connects residues cysteine 130 and cysteine 207. The helical transmembrane segment at 133 to 153 (MSLFLQINMYSSVFFLTWMSF) threads the bilayer. The Cytoplasmic segment spans residues 154–175 (DRYLALAKAMRCGLFRTKHHAR). The chain crosses the membrane as a helical span at residues 176-194 (LSCGLIWMASVSATLVPFT). At 195–220 (AVHLRHTEEACFCFADVREVQWLEVT) the chain is on the extracellular side. The helical transmembrane segment at 221–236 (LGFIMPFAIIGLCYSL) threads the bilayer. Topologically, residues 237-259 (IVRALIRAHRHRGLRPRRQKALR) are cytoplasmic. Residues 260 to 280 (MIFAVVLVFFICWLPENVFIS) form a helical membrane-spanning segment. The Extracellular segment spans residues 281–306 (VHLLQWTQPGDTPCKQSFRHAYPLTG). The chain crosses the membrane as a helical span at residues 307–327 (HIVNLAAFSNSCLNPLIYSFL). The Cytoplasmic portion of the chain corresponds to 328 to 375 (GETFRDKLRLYVEQKTSLPALNRFCHATLKAVIPDSTEQSEVRFSSAV).

It belongs to the G-protein coupled receptor 1 family. In terms of assembly, interacts with RAMP3; the interaction confers proper subcellular localization and function in cardioprotection. Interacts with KRT7 and KRT8. Interacts with EGFR; the interaction increases after agonist-induced stimulation in cancer-associated fibroblasts (CAF). Interacts with EGFR and ESR1. Interacts (via C-terminus tail motif) with DLG4 (via N-terminus tandem pair of PDZ domains); the interaction is direct and induces the increase of GPER1 protein levels residing at the plasma membrane surface in a estradiol-independent manner. Homodimer. Heterodimer; heterodimerizes with other G-protein-coupled receptor (GPCRs) like CRHR1, HTR1A and PAQR8. Post-translationally, ubiquitinated; ubiquitination occurs at the plasma membrane and leads to proteasome-mediated degradation. In terms of processing, N-glycosylated. As to expression, expressed in brain, heart, spleen, preadipocytes, mature adipocytes and primary hippocampal neurons. Expressed in neurons of the hippocampus, hypothalamic paraventricular nucleus (PVH), supraoptic nucleus (SON) and the median eminence. Expressed in the nucleus ambiguous (at protein level). Expressed in brain, pituitary gland, adrenal medulla, renal pelvis, ovary, endothelial cells, visceral fat tissues and islets of Langerhans.

Its subcellular location is the nucleus. It localises to the cytoplasm. It is found in the perinuclear region. The protein localises to the cytoskeleton. The protein resides in the cell membrane. Its subcellular location is the endoplasmic reticulum membrane. It localises to the golgi apparatus membrane. It is found in the cell projection. The protein localises to the dendrite. The protein resides in the cytoplasmic vesicle membrane. Its subcellular location is the early endosome. It localises to the recycling endosome. It is found in the golgi apparatus. The protein localises to the trans-Golgi network. The protein resides in the dendritic spine membrane. Its subcellular location is the axon. It localises to the postsynaptic density. It is found in the mitochondrion membrane. G-protein coupled estrogen receptor that binds to 17-beta-estradiol (E2) with high affinity, leading to rapid and transient activation of numerous intracellular signaling pathways. Stimulates cAMP production, calcium mobilization and tyrosine kinase Src inducing the release of heparin-bound epidermal growth factor (HB-EGF) and subsequent transactivation of the epidermal growth factor receptor (EGFR), activating downstream signaling pathways such as PI3K/Akt and ERK/MAPK. Mediates pleiotropic functions among others in the cardiovascular, endocrine, reproductive, immune and central nervous systems. Has a role in cardioprotection by reducing cardiac hypertrophy and perivascular fibrosis in a RAMP3-dependent manner. Regulates arterial blood pressure by stimulating vasodilation and reducing vascular smooth muscle and microvascular endothelial cell proliferation. Plays a role in blood glucose homeostasis contributing to the insulin secretion response by pancreatic beta cells. Triggers mitochondrial apoptosis during pachytene spermatocyte differentiation. Stimulates uterine epithelial cell proliferation. Enhances uterine contractility in response to oxytocin. Contributes to thymic atrophy by inducing apoptosis. Attenuates TNF-mediated endothelial expression of leukocyte adhesion molecules. Promotes neuritogenesis in developing hippocampal neurons. Plays a role in acute neuroprotection against NMDA-induced excitotoxic neuronal death. Increases firing activity and intracellular calcium oscillations in luteinizing hormone-releasing hormone (LHRH) neurons. Inhibits early osteoblast proliferation at growth plate during skeletal development. Inhibits mature adipocyte differentiation and lipid accumulation. Involved in the recruitment of beta-arrestin 2 ARRB2 at the plasma membrane in epithelial cells. Also functions as a receptor for aldosterone mediating rapid regulation of vascular contractibility through the PI3K/ERK signaling pathway. Involved in cancer progression regulation. Stimulates cancer-associated fibroblast (CAF) proliferation by a rapid genomic response through the EGFR/ERK transduction pathway. Associated with EGFR, may act as a transcription factor activating growth regulatory genes (c-fos, cyclin D1). Promotes integrin alpha-5/beta-1 and fibronectin (FN) matrix assembly in breast cancer cells. The chain is G-protein coupled estrogen receptor 1 (Gper1) from Mus musculus (Mouse).